A 382-amino-acid polypeptide reads, in one-letter code: Anhydro-N-acetylmuramic acid kinase (382 aa).

Residue 22–29 (GTSMDGVD) coordinates ATP.

This sequence belongs to the anhydro-N-acetylmuramic acid kinase family.

It catalyses the reaction 1,6-anhydro-N-acetyl-beta-muramate + ATP + H2O = N-acetyl-D-muramate 6-phosphate + ADP + H(+). It participates in amino-sugar metabolism; 1,6-anhydro-N-acetylmuramate degradation. The protein operates within cell wall biogenesis; peptidoglycan recycling. Catalyzes the specific phosphorylation of 1,6-anhydro-N-acetylmuramic acid (anhMurNAc) with the simultaneous cleavage of the 1,6-anhydro ring, generating MurNAc-6-P. Is required for the utilization of anhMurNAc either imported from the medium or derived from its own cell wall murein, and thus plays a role in cell wall recycling. This Burkholderia orbicola (strain MC0-3) protein is Anhydro-N-acetylmuramic acid kinase.